We begin with the raw amino-acid sequence, 204 residues long: Guanylate kinase (204 aa).

One can recognise a Guanylate kinase-like domain in the interval 3–181; the sequence is GTLIIITAPS…ALDDLVAVVR (179 aa). 10-17 serves as a coordination point for ATP; sequence APSGAGKT.

The protein belongs to the guanylate kinase family.

The protein resides in the cytoplasm. The catalysed reaction is GMP + ATP = GDP + ADP. Essential for recycling GMP and indirectly, cGMP. The protein is Guanylate kinase of Aromatoleum aromaticum (strain DSM 19018 / LMG 30748 / EbN1) (Azoarcus sp. (strain EbN1)).